We begin with the raw amino-acid sequence, 199 residues long: ATP-dependent Clp protease proteolytic subunit (199 aa).

Residue serine 99 is the Nucleophile of the active site. The active site involves histidine 124.

Belongs to the peptidase S14 family. As to quaternary structure, fourteen ClpP subunits assemble into 2 heptameric rings which stack back to back to give a disk-like structure with a central cavity, resembling the structure of eukaryotic proteasomes.

Its subcellular location is the cytoplasm. The enzyme catalyses Hydrolysis of proteins to small peptides in the presence of ATP and magnesium. alpha-casein is the usual test substrate. In the absence of ATP, only oligopeptides shorter than five residues are hydrolyzed (such as succinyl-Leu-Tyr-|-NHMec, and Leu-Tyr-Leu-|-Tyr-Trp, in which cleavage of the -Tyr-|-Leu- and -Tyr-|-Trp bonds also occurs).. Functionally, cleaves peptides in various proteins in a process that requires ATP hydrolysis. Has a chymotrypsin-like activity. Plays a major role in the degradation of misfolded proteins. This chain is ATP-dependent Clp protease proteolytic subunit, found in Lactococcus lactis subsp. lactis (strain IL1403) (Streptococcus lactis).